The following is a 185-amino-acid chain: Ribonuclease HII (185 aa).

One can recognise an RNase H type-2 domain in the interval 1–185 (MKICGIDEAG…LKHLQGILEF (185 aa)). The a divalent metal cation site is built by aspartate 7, glutamate 8, and aspartate 96.

Belongs to the RNase HII family. Mn(2+) is required as a cofactor. Mg(2+) serves as cofactor.

It localises to the cytoplasm. The enzyme catalyses Endonucleolytic cleavage to 5'-phosphomonoester.. In terms of biological role, endonuclease that specifically degrades the RNA of RNA-DNA hybrids. This chain is Ribonuclease HII, found in Campylobacter hominis (strain ATCC BAA-381 / DSM 21671 / CCUG 45161 / LMG 19568 / NCTC 13146 / CH001A).